The sequence spans 88 residues: Putative membrane protein insertion efficiency factor (88 aa).

Residues 68 to 88 form a disordered region; sequence VPPPNSDTRARGEADARSHRL. Residues 75 to 88 show a composition bias toward basic and acidic residues; sequence TRARGEADARSHRL.

It belongs to the UPF0161 family.

Its subcellular location is the cell inner membrane. Its function is as follows. Could be involved in insertion of integral membrane proteins into the membrane. The protein is Putative membrane protein insertion efficiency factor of Burkholderia cenocepacia (strain ATCC BAA-245 / DSM 16553 / LMG 16656 / NCTC 13227 / J2315 / CF5610) (Burkholderia cepacia (strain J2315)).